The sequence spans 174 residues: Small ribosomal subunit protein uS5 (174 aa).

In terms of domain architecture, S5 DRBM spans leucine 19–isoleucine 82.

It belongs to the universal ribosomal protein uS5 family. Part of the 30S ribosomal subunit. Contacts proteins S4 and S8.

Functionally, with S4 and S12 plays an important role in translational accuracy. Located at the back of the 30S subunit body where it stabilizes the conformation of the head with respect to the body. This chain is Small ribosomal subunit protein uS5, found in Aromatoleum aromaticum (strain DSM 19018 / LMG 30748 / EbN1) (Azoarcus sp. (strain EbN1)).